The primary structure comprises 278 residues: HTH-type transcriptional activator RhaS (278 aa).

The region spanning 174-272 is the HTH araC/xylS-type domain; the sequence is NLLLAWLEDH…NWSPRDIRQG (99 aa). 2 DNA-binding regions (H-T-H motif) span residues 191 to 212 and 239 to 262; these read DAVA…KQQT and VTDI…RREF.

As to quaternary structure, binds DNA as a dimer.

The protein localises to the cytoplasm. Its function is as follows. Activates expression of the rhaBAD and rhaT operons. This chain is HTH-type transcriptional activator RhaS, found in Escherichia coli (strain SMS-3-5 / SECEC).